The chain runs to 447 residues: Argininosuccinate synthase (447 aa).

Residues 17–25 (AFSGGLDTS) and A43 contribute to the ATP site. Position 99 (Y99) interacts with L-citrulline. ATP is bound by residues G129 and T131. Residues T131, N135, and D136 each coordinate L-aspartate. N135 lines the L-citrulline pocket. D136 is an ATP binding site. Residues R139 and S192 each contribute to the L-citrulline site. An ATP-binding site is contributed by D194. L-citrulline contacts are provided by T201, E203, and E280.

It belongs to the argininosuccinate synthase family. Type 2 subfamily. In terms of assembly, homotetramer.

It localises to the cytoplasm. It carries out the reaction L-citrulline + L-aspartate + ATP = 2-(N(omega)-L-arginino)succinate + AMP + diphosphate + H(+). It functions in the pathway amino-acid biosynthesis; L-arginine biosynthesis; L-arginine from L-ornithine and carbamoyl phosphate: step 2/3. The chain is Argininosuccinate synthase from Escherichia coli O1:K1 / APEC.